Reading from the N-terminus, the 399-residue chain is Enoyl-[acyl-carrier-protein] reductase [NADH] (399 aa).

NAD(+) contacts are provided by residues 48-53 (GASTGY), 74-75 (FE), 111-112 (DA), and 139-140 (LA). Residue tyrosine 225 coordinates substrate. Residue tyrosine 235 is the Proton donor of the active site. Residues lysine 244 and 274-276 (VVT) contribute to the NAD(+) site.

The protein belongs to the TER reductase family. Monomer.

It carries out the reaction a 2,3-saturated acyl-[ACP] + NAD(+) = a (2E)-enoyl-[ACP] + NADH + H(+). It participates in lipid metabolism; fatty acid biosynthesis. Involved in the final reduction of the elongation cycle of fatty acid synthesis (FAS II). Catalyzes the reduction of a carbon-carbon double bond in an enoyl moiety that is covalently linked to an acyl carrier protein (ACP). This Yersinia enterocolitica serotype O:8 / biotype 1B (strain NCTC 13174 / 8081) protein is Enoyl-[acyl-carrier-protein] reductase [NADH].